A 190-amino-acid chain; its full sequence is Peptidyl-prolyl cis-trans isomerase A (190 aa).

A signal peptide spans Met1–Ala24. The 162-residue stretch at Gly27–Val188 folds into the PPIase cyclophilin-type domain.

Belongs to the cyclophilin-type PPIase family.

It is found in the periplasm. It catalyses the reaction [protein]-peptidylproline (omega=180) = [protein]-peptidylproline (omega=0). In terms of biological role, PPIases accelerate the folding of proteins. It catalyzes the cis-trans isomerization of proline imidic peptide bonds in oligopeptides. The sequence is that of Peptidyl-prolyl cis-trans isomerase A (ppiA) from Salmonella typhimurium (strain LT2 / SGSC1412 / ATCC 700720).